The chain runs to 565 residues: uncharacterized protein (565 aa).

Gly130–Thr137 lines the ATP pocket. Residues Glu503–Glu565 enclose the R3H domain.

The protein belongs to the ycf45 family.

Its subcellular location is the plastid. The protein resides in the chloroplast. This is an uncharacterized protein from Porphyra purpurea (Red seaweed).